The chain runs to 96 residues: Co-chaperonin GroES (96 aa).

It belongs to the GroES chaperonin family. As to quaternary structure, heptamer of 7 subunits arranged in a ring. Interacts with the chaperonin GroEL.

Its subcellular location is the cytoplasm. Together with the chaperonin GroEL, plays an essential role in assisting protein folding. The GroEL-GroES system forms a nano-cage that allows encapsulation of the non-native substrate proteins and provides a physical environment optimized to promote and accelerate protein folding. GroES binds to the apical surface of the GroEL ring, thereby capping the opening of the GroEL channel. This Buchnera aphidicola subsp. Acyrthosiphon pisum (strain 5A) protein is Co-chaperonin GroES.